Here is a 317-residue protein sequence, read N- to C-terminus: Aspartate carbamoyltransferase catalytic subunit (317 aa).

Positions 65 and 66 each coordinate carbamoyl phosphate. Lys-93 serves as a coordination point for L-aspartate. Residues Arg-115, His-145, and Gln-148 each contribute to the carbamoyl phosphate site. L-aspartate-binding residues include Arg-178 and Arg-233. Gly-274 and Pro-275 together coordinate carbamoyl phosphate.

Belongs to the aspartate/ornithine carbamoyltransferase superfamily. ATCase family. In terms of assembly, heterododecamer (2C3:3R2) of six catalytic PyrB chains organized as two trimers (C3), and six regulatory PyrI chains organized as three dimers (R2).

It carries out the reaction carbamoyl phosphate + L-aspartate = N-carbamoyl-L-aspartate + phosphate + H(+). The protein operates within pyrimidine metabolism; UMP biosynthesis via de novo pathway; (S)-dihydroorotate from bicarbonate: step 2/3. Functionally, catalyzes the condensation of carbamoyl phosphate and aspartate to form carbamoyl aspartate and inorganic phosphate, the committed step in the de novo pyrimidine nucleotide biosynthesis pathway. The chain is Aspartate carbamoyltransferase catalytic subunit from Bordetella parapertussis (strain 12822 / ATCC BAA-587 / NCTC 13253).